A 491-amino-acid polypeptide reads, in one-letter code: Lysine--tRNA ligase 1 (491 aa).

Residues Glu-400 and Glu-407 each coordinate Mg(2+).

It belongs to the class-II aminoacyl-tRNA synthetase family. In terms of assembly, homodimer. It depends on Mg(2+) as a cofactor.

The protein resides in the cytoplasm. It carries out the reaction tRNA(Lys) + L-lysine + ATP = L-lysyl-tRNA(Lys) + AMP + diphosphate. This is Lysine--tRNA ligase 1 from Mycoplasmopsis pulmonis (strain UAB CTIP) (Mycoplasma pulmonis).